A 326-amino-acid chain; its full sequence is UDP-3-O-acylglucosamine N-acyltransferase (326 aa).

H235 functions as the Proton acceptor in the catalytic mechanism.

It belongs to the transferase hexapeptide repeat family. LpxD subfamily. As to quaternary structure, homotrimer.

The enzyme catalyses a UDP-3-O-[(3R)-3-hydroxyacyl]-alpha-D-glucosamine + a (3R)-hydroxyacyl-[ACP] = a UDP-2-N,3-O-bis[(3R)-3-hydroxyacyl]-alpha-D-glucosamine + holo-[ACP] + H(+). It functions in the pathway bacterial outer membrane biogenesis; LPS lipid A biosynthesis. Catalyzes the N-acylation of UDP-3-O-acylglucosamine using 3-hydroxyacyl-ACP as the acyl donor. Is involved in the biosynthesis of lipid A, a phosphorylated glycolipid that anchors the lipopolysaccharide to the outer membrane of the cell. This chain is UDP-3-O-acylglucosamine N-acyltransferase, found in Helicobacter hepaticus (strain ATCC 51449 / 3B1).